Consider the following 126-residue polypeptide: Large ribosomal subunit protein bL12 (126 aa).

It belongs to the bacterial ribosomal protein bL12 family. Homodimer. Part of the ribosomal stalk of the 50S ribosomal subunit. Forms a multimeric L10(L12)X complex, where L10 forms an elongated spine to which 2 to 4 L12 dimers bind in a sequential fashion. Binds GTP-bound translation factors.

In terms of biological role, forms part of the ribosomal stalk which helps the ribosome interact with GTP-bound translation factors. Is thus essential for accurate translation. This is Large ribosomal subunit protein bL12 from Caulobacter sp. (strain K31).